A 157-amino-acid polypeptide reads, in one-letter code: Endoribonuclease YbeY (157 aa).

Residues His114, His118, and His124 each coordinate Zn(2+).

The protein belongs to the endoribonuclease YbeY family. Zn(2+) is required as a cofactor.

The protein resides in the cytoplasm. Its function is as follows. Single strand-specific metallo-endoribonuclease involved in late-stage 70S ribosome quality control and in maturation of the 3' terminus of the 16S rRNA. The polypeptide is Endoribonuclease YbeY (Yersinia pseudotuberculosis serotype O:3 (strain YPIII)).